Reading from the N-terminus, the 67-residue chain is Conotoxin VnMMSK-02 (67 aa).

The signal sequence occupies residues 1 to 20 (MMSKLGALLTICLLLFPLTA). A propeptide spanning residues 21–52 (LPLDGDQPADRPAERMQDDISSEQHPLFDKER) is cleaved from the precursor. Position 53 is a pyrrolidone carboxylic acid (glutamine 53). 3 disulfides stabilise this stretch: cysteine 54–cysteine 66, cysteine 55–cysteine 62, and cysteine 59–cysteine 65. At proline 64 the chain carries 4-hydroxyproline. Position 66 is a cysteine amide (cysteine 66).

Belongs to the conotoxin M superfamily. In terms of tissue distribution, expressed by the venom duct.

Its subcellular location is the secreted. This chain is Conotoxin VnMMSK-02, found in Conus ventricosus (Mediterranean cone).